A 1071-amino-acid polypeptide reads, in one-letter code: Ubiquitin carboxyl-terminal hydrolase 7 (1071 aa).

A disordered region spans residues 467-532; sequence KARLQQEQQQ…MPTTPEIPPP (66 aa). Positions 471-480 are enriched in low complexity; the sequence is QQEQQQQQQQ. Polar residues predominate over residues 481-495; it reads PDSQDSFSAKESSTK. Pro residues-rich tracts occupy residues 497 to 507 and 516 to 532; these read PEPPSWKPPDL and PPPP…IPPP. Positions 609–1069 constitute a USP domain; sequence TGLRNLGNTC…DVYVLFYERV (461 aa). The active-site Nucleophile is the cysteine 618. The interval 913 to 942 is disordered; that stretch reads RMLGGSGKRSSSSTPFSTGGNDSNNSSDYK. The segment covering 920 to 932 has biased composition (polar residues); sequence KRSSSSTPFSTGG. Catalysis depends on histidine 1014, which acts as the Proton acceptor.

This sequence belongs to the peptidase C19 family.

Its subcellular location is the cytoplasm. It carries out the reaction Thiol-dependent hydrolysis of ester, thioester, amide, peptide and isopeptide bonds formed by the C-terminal Gly of ubiquitin (a 76-residue protein attached to proteins as an intracellular targeting signal).. Its function is as follows. Involved in the sorting of ubiquitinated cargo proteins at the multivesicular body (MVB). This is Ubiquitin carboxyl-terminal hydrolase 7 (UBP7) from Saccharomyces cerevisiae (strain ATCC 204508 / S288c) (Baker's yeast).